A 422-amino-acid polypeptide reads, in one-letter code: Regulator of sigma-W protease RasP (422 aa).

4 helical membrane passes run 6–26 (VIAFIIIFGTLVFFHELGHLL), 175–195 (IAAGPIMNFILAYVILVMLGL), 346–366 (IVNLFQFAAFLSINLGIVNLL), and 394–414 (EAFVVFIGVAFLMLLMLVVTW). His-20 contacts Zn(2+). Glu-21 is an active-site residue. Residue His-24 participates in Zn(2+) binding. The 86-residue stretch at 186–271 (AYVILVMLGL…TLHISVTPEA (86 aa)) folds into the PDZ domain.

The protein belongs to the peptidase M50B family. The cofactor is Zn(2+).

The protein localises to the cell membrane. In terms of biological role, is responsible for site-2 cleavage of the RsiW anti-sigma factor. This results, after a third proteolytic step catalyzed by the ClpXP protease, in the release of SigW and the transcription activation of the genes under the control of the sigma-W factor. Can also cleave liberated signal peptides of PenP and Mpr, probably within in the cell membrane. The chain is Regulator of sigma-W protease RasP from Bacillus subtilis (strain 168).